The primary structure comprises 708 residues: Putative adhesion G protein-coupled receptor F2P (708 aa).

The Extracellular segment spans residues 1-451 (MGLTAYGNRR…ESLILTYITY (451 aa)). Residues Asn21, Asn220, Asn252, Asn260, Asn305, Asn313, and Asn358 are each glycosylated (N-linked (GlcNAc...) asparagine). Residues 293–442 (MGTTISGDNI…SILMSPHILE (150 aa)) enclose the GAIN-B domain. 2 cysteine pairs are disulfide-bonded: Cys394–Cys421 and Cys409–Cys423. The GPS stretch occupies residues 394-442 (CVGWHSVENRWDQQACKMIQENSQQAVCKCRPSKLFTSFSILMSPHILE). A helical transmembrane segment spans residues 452–472 (VGLGISICSLILCLSIEVLVW). Residues 473-487 (SQVTKTEITYLRHVC) are Cytoplasmic-facing. The helical transmembrane segment at 488–508 (IVNIAATLLMADVWFIVASFL) threads the bilayer. The Extracellular portion of the chain corresponds to 509-530 (SGPITHHKGCVAATFFVHFFYL). Residues 531–551 (SVFFWMLAKALLILYGIMIVF) traverse the membrane as a helical segment. At 552–557 (HTLPKS) the chain is on the cytoplasmic side. The chain crosses the membrane as a helical span at residues 558–578 (VLVASLFSVGYGCPLAIAAIT). The Extracellular segment spans residues 579–606 (VAATEPGKGYLRPEICWLNWDMTKALLA). A helical membrane pass occupies residues 607–627 (FVIPALAIVVVNLITVTLVIV). Topologically, residues 628-650 (KTQRAAIGNSMFQEVRAIVRISK) are cytoplasmic. Residues 651-671 (NIAILTPLLGLTWGFGVATVI) traverse the membrane as a helical segment. Topologically, residues 672–674 (DDR) are extracellular. A helical transmembrane segment spans residues 675-695 (SLAFHIIFSLLNAFQVSPDAS). At 696–708 (DQVQSERIHEDVL) the chain is on the cytoplasmic side.

It belongs to the G-protein coupled receptor 2 family. Adhesion G-protein coupled receptor (ADGR) subfamily. In terms of tissue distribution, high expression in kidney. Up-regulated in lung adenocarcinomas and prostate cancers.

It is found in the membrane. Its function is as follows. Orphan receptor. The protein is Putative adhesion G protein-coupled receptor F2P of Homo sapiens (Human).